The sequence spans 226 residues: Uracil-DNA glycosylase (226 aa).

The active-site Proton acceptor is the D64.

This sequence belongs to the uracil-DNA glycosylase (UDG) superfamily. UNG family.

It localises to the cytoplasm. The catalysed reaction is Hydrolyzes single-stranded DNA or mismatched double-stranded DNA and polynucleotides, releasing free uracil.. Functionally, excises uracil residues from the DNA which can arise as a result of misincorporation of dUMP residues by DNA polymerase or due to deamination of cytosine. The polypeptide is Uracil-DNA glycosylase (Vibrio campbellii (strain ATCC BAA-1116)).